A 214-amino-acid polypeptide reads, in one-letter code: Octanoyltransferase (214 aa).

One can recognise a BPL/LPL catalytic domain in the interval 28–210 (GTAEDALYLL…EFGKVFTDTA (183 aa)). Substrate contacts are provided by residues 73-80 (RGGNITCH), 140-142 (SIG), and 153-155 (GLS). Residue C171 is the Acyl-thioester intermediate of the active site.

It belongs to the LipB family.

It is found in the cytoplasm. The enzyme catalyses octanoyl-[ACP] + L-lysyl-[protein] = N(6)-octanoyl-L-lysyl-[protein] + holo-[ACP] + H(+). It functions in the pathway protein modification; protein lipoylation via endogenous pathway; protein N(6)-(lipoyl)lysine from octanoyl-[acyl-carrier-protein]: step 1/2. Its function is as follows. Catalyzes the transfer of endogenously produced octanoic acid from octanoyl-acyl-carrier-protein onto the lipoyl domains of lipoate-dependent enzymes. Lipoyl-ACP can also act as a substrate although octanoyl-ACP is likely to be the physiological substrate. This is Octanoyltransferase from Maridesulfovibrio salexigens (strain ATCC 14822 / DSM 2638 / NCIMB 8403 / VKM B-1763) (Desulfovibrio salexigens).